We begin with the raw amino-acid sequence, 380 residues long: DNA replication and repair protein RecF (380 aa).

30–37 (GPNGFGKT) provides a ligand contact to ATP.

Belongs to the RecF family.

The protein localises to the cytoplasm. In terms of biological role, the RecF protein is involved in DNA metabolism; it is required for DNA replication and normal SOS inducibility. RecF binds preferentially to single-stranded, linear DNA. It also seems to bind ATP. The sequence is that of DNA replication and repair protein RecF from Mycobacterium sp. (strain JLS).